A 271-amino-acid polypeptide reads, in one-letter code: Glutamate racemase (271 aa).

Substrate contacts are provided by residues 10-11 (DS) and 42-43 (YG). The Proton donor/acceptor role is filled by cysteine 73. Residue 74-75 (NT) participates in substrate binding. Cysteine 183 functions as the Proton donor/acceptor in the catalytic mechanism. A substrate-binding site is contributed by 184–185 (TH).

It belongs to the aspartate/glutamate racemases family.

It catalyses the reaction L-glutamate = D-glutamate. It participates in cell wall biogenesis; peptidoglycan biosynthesis. Functionally, provides the (R)-glutamate required for cell wall biosynthesis. This Lactococcus lactis subsp. cremoris (strain MG1363) protein is Glutamate racemase.